A 95-amino-acid chain; its full sequence is 1,2-phenylacetyl-CoA epoxidase, subunit B (95 aa).

As to quaternary structure, homotrimer. Forms a stable heterodimer with PaaC. Probably forms an oligomer with PaaAC.

It participates in aromatic compound metabolism; phenylacetate degradation. In terms of biological role, component of 1,2-phenylacetyl-CoA epoxidase multicomponent enzyme system which catalyzes the reduction of phenylacetyl-CoA (PA-CoA) to form 1,2-epoxyphenylacetyl-CoA. The subunit B may play a regulatory role or be directly involved in electron transport. This chain is 1,2-phenylacetyl-CoA epoxidase, subunit B (paaB), found in Escherichia coli (strain K12).